The following is a 211-amino-acid chain: Probable septum site-determining protein MinC (211 aa).

This sequence belongs to the MinC family. In terms of assembly, interacts with MinD and FtsZ.

In terms of biological role, cell division inhibitor that blocks the formation of polar Z ring septums. Rapidly oscillates between the poles of the cell to destabilize FtsZ filaments that have formed before they mature into polar Z rings. Prevents FtsZ polymerization. This Clostridium acetobutylicum (strain ATCC 824 / DSM 792 / JCM 1419 / IAM 19013 / LMG 5710 / NBRC 13948 / NRRL B-527 / VKM B-1787 / 2291 / W) protein is Probable septum site-determining protein MinC.